The following is a 309-amino-acid chain: Low density lipoprotein receptor adapter protein 1-B (309 aa).

Residues 41-195 (LLEGMLFHLK…SDGEGASSSQ (155 aa)) enclose the PID domain. Residues 179–201 (DKREKSGSDGEGASSSQSDGSSS) form a disordered region. Over residues 189-201 (EGASSSQSDGSSS) the composition is skewed to low complexity. A Clathrin box motif is present at residues 213-217 (LLDFE). Positions 250-277 (WELDDGLDEAFARLAESRTNPQVLDIGL) are AP-2 complex binding. The [DE]-X(1,2)-F-X-X-[FL]-X-X-X-R motif motif lies at 258-267 (EAFARLAESR).

As to quaternary structure, interacts (via PID domain) with ldlr (via NPXY motif). Binds to soluble clathrin trimers and to the adapter protein complex 2 (AP-2, beta 2 subunit). Binds to phosphoinositides, which regulate clathrin bud assembly at the cell surface. Interacts with the VLDL receptor (vldlr). Interacts with the vitellogenin receptor. Expressed at high level during oogenesis and embryogenesis. Found at low level in the adult liver and spleen. Found at very low level in testis and heart. Not found in the oocyte vegetal cortex.

It is found in the cytoplasm. Its function is as follows. Adapter protein (clathrin-associated sorting protein (CLASP)) required for efficient endocytosis of the LDL receptor (LDLR). Also involved in the vitellogenin receptor mediated endocytosis of nutrients during oogenesis. In Xenopus laevis (African clawed frog), this protein is Low density lipoprotein receptor adapter protein 1-B.